The chain runs to 468 residues: MFLATLYFALPLLDLLMSAEVSGGDRLDCVKASDQCLKEQSCSTKYRTLRQCVAGKETNFSLTSGLEAKDECRSAMEALKQKSLYNCRCKRGMKKEKNCLRIYWSMYQSLQGNDLLEDSPYEPVNSRLSDIFRAVPFISDVFQQVEHISKGNNCLDAAKACNLDDTCKKYRSAYITPCTTSMSNEVCNRRKCHKALRQFFDKVPAKHSYGMLFCSCRDIACTERRRQTIVPVCSYEERERPNCLSLQDSCKTNYICRSRLADFFTNCQPESRSVSNCLKENYADCLLAYSGLIGTVMTPNYVDSSSLSVAPWCDCSNSGNDLEDCLKFLNFFKDNTCLKNAIQAFGNGSDVTMWQPAPPVQTTTATTTTAFRVKNKPLGPAGSENEIPTHVLPPCANLQAQKLKSNVSGSTHLCLSDSDFGKDGLAGASSHITTKSMAAPPSCSLSSLPVLMLTALAALLSVSLAETS.

The signal sequence occupies residues 1–24; the sequence is MFLATLYFALPLLDLLMSAEVSGG. 3 consecutive repeat copies span residues 25-113, 150-238, and 239-342. Residues C36 and C42 are joined by a disulfide bond. N-linked (GlcNAc...) asparagine glycosylation is present at N59. 10 cysteine pairs are disulfide-bonded: C154–C214, C161–C167, C178–C192, C187–C233, C216–C221, C243–C313, C250–C256, C267–C285, C277–C337, and C315–C325. Residues N347 and N406 are each glycosylated (N-linked (GlcNAc...) asparagine). Residue S430 is the site of GPI-anchor amidated serine attachment. A propeptide spans 431–468 (removed in mature form); sequence HITTKSMAAPPSCSLSSLPVLMLTALAALLSVSLAETS.

It belongs to the GDNFR family. As to quaternary structure, interacts with GDNF ligand and RET: forms a 2:2:2 ternary complex composed of GDNF ligand, GFRA1 and RET receptor. Interacts with SORL1, either alone or in complex with GDNF. Interaction between SORL1 and GFRA1 leads to GFRA1 internalization, but not degradation. Expressed in liver, brain, kidney and cochlea.

It is found in the cell membrane. The protein resides in the golgi apparatus. The protein localises to the trans-Golgi network. It localises to the endosome. Its subcellular location is the multivesicular body. Coreceptor for GDNF, a neurotrophic factor that enhances survival and morphological differentiation of dopaminergic neurons and increases their high-affinity dopamine uptake. GDNF-binding leads to autophosphorylation and activation of the RET receptor. This Rattus norvegicus (Rat) protein is GDNF family receptor alpha-1 (Gfra1).